Reading from the N-terminus, the 234-residue chain is Thymidylate kinase (234 aa).

11–18 (GLEGSGKT) is a binding site for ATP.

It belongs to the thymidylate kinase family.

The catalysed reaction is dTMP + ATP = dTDP + ADP. Phosphorylation of dTMP to form dTDP in both de novo and salvage pathways of dTTP synthesis. The protein is Thymidylate kinase of Wigglesworthia glossinidia brevipalpis.